We begin with the raw amino-acid sequence, 189 residues long: Interferon alpha-21 (189 aa).

The first 23 residues, 1–23, serve as a signal peptide directing secretion; the sequence is MALSFSLLMAVLVLSYKSICSLG. Intrachain disulfides connect C24/C122 and C52/C162.

It belongs to the alpha/beta interferon family.

It is found in the secreted. Produced by macrophages, IFN-alpha have antiviral activities. Interferon stimulates the production of two enzymes: a protein kinase and an oligoadenylate synthetase. This is Interferon alpha-21 (IFNA21) from Homo sapiens (Human).